The sequence spans 859 residues: Leucine--tRNA ligase (859 aa).

Positions 42-52 match the 'HIGH' region motif; the sequence is PYPSGRLHMGH. Positions 618–622 match the 'KMSKS' region motif; it reads KMSKS. Lysine 621 contributes to the ATP binding site.

This sequence belongs to the class-I aminoacyl-tRNA synthetase family.

It localises to the cytoplasm. The catalysed reaction is tRNA(Leu) + L-leucine + ATP = L-leucyl-tRNA(Leu) + AMP + diphosphate. The chain is Leucine--tRNA ligase from Shewanella sp. (strain ANA-3).